A 327-amino-acid polypeptide reads, in one-letter code: D-alanine--D-alanine ligase (327 aa).

Residues 113–312 (KRLWMTYGLA…YEDFVMQVVA (200 aa)) form the ATP-grasp domain. 139 to 194 (AADLGLPLIVKPAREGSSIGLTKVTAADQMRAAFEKAAALDNDVIAETFIDGAELT) provides a ligand contact to ATP. The Mg(2+) site is built by D266, E279, and N281.

This sequence belongs to the D-alanine--D-alanine ligase family. Mg(2+) is required as a cofactor. It depends on Mn(2+) as a cofactor.

It is found in the cytoplasm. It catalyses the reaction 2 D-alanine + ATP = D-alanyl-D-alanine + ADP + phosphate + H(+). Its pathway is cell wall biogenesis; peptidoglycan biosynthesis. Cell wall formation. The chain is D-alanine--D-alanine ligase from Cupriavidus necator (strain ATCC 17699 / DSM 428 / KCTC 22496 / NCIMB 10442 / H16 / Stanier 337) (Ralstonia eutropha).